Consider the following 83-residue polypeptide: UPF0297 protein Moth_1643 (83 aa).

Belongs to the UPF0297 family.

In Moorella thermoacetica (strain ATCC 39073 / JCM 9320), this protein is UPF0297 protein Moth_1643.